Consider the following 467-residue polypeptide: Membrane-bound acylglycerophosphatidylinositol O-acyltransferase mboat7 (467 aa).

The Cytoplasmic portion of the chain corresponds to 1-5 (MSPDE). A helical membrane pass occupies residues 6-22 (LVYLGILAATIPVGFLF). The Lumenal portion of the chain corresponds to 23–33 (RYLSPPVKQGA). A helical membrane pass occupies residues 34–57 (ALLLGLIISIATCGIHTLHSLCTV). Over 58–73 (LGTWIIIKINWRSAPA) the chain is Cytoplasmic. The helical transmembrane segment at 74 to 93 (LSLAWTFLYLLFFRLVTWFG) threads the bilayer. At 94-193 (LPQPTPFANA…LPGKEPCLQR (100 aa)) the chain is on the lumenal side. The chain crosses the membrane as a helical span at residues 194–211 (LKMVPVYGLLFIAVNSVF). Residues 212-230 (PLSYVRTEDFLEHNYFYRF) are Cytoplasmic-facing. Residues 231-260 (FYMVAIFFVFRMRFYSAWCGAEAGCISAGL) traverse the membrane as a helical segment. Topologically, residues 261–421 (GCYPQGALSK…LKASDTISYW (161 aa)) are lumenal. The N-linked (GlcNAc...) asparagine glycan is linked to Asn316. A helical transmembrane segment spans residues 422–442 (SSIYFVIHIIAIVCIAVGQFM). Residues 443-467 (KGGRKREKRERGEGEKEDAVREKAE) lie on the Cytoplasmic side of the membrane. The interval 447-467 (KREKRERGEGEKEDAVREKAE) is disordered. The span at 451-467 (RERGEGEKEDAVREKAE) shows a compositional bias: basic and acidic residues.

This sequence belongs to the membrane-bound acyltransferase family.

The protein localises to the endoplasmic reticulum membrane. It catalyses the reaction a 1-acyl-sn-glycero-3-phospho-(1D-myo-inositol) + (5Z,8Z,11Z,14Z)-eicosatetraenoyl-CoA = a 1-acyl-2-(5Z,8Z,11Z,14Z-eicosatetraenoyl)-sn-glycero-3-phospho-(1D-myo-inositol) + CoA. The enzyme catalyses (5Z,8Z,11Z,14Z)-eicosatetraenoyl-CoA + 1-hexadecanoyl-sn-glycero-3-phosphocholine = 1-hexadecanoyl-2-(5Z,8Z,11Z,14Z-eicosatetraenoyl)-sn-glycero-3-phosphocholine + CoA. It carries out the reaction a 1-acyl-sn-glycero-3-phospho-(1D-myo-inositol) + an acyl-CoA = a 1,2-diacyl-sn-glycero-3-phospho-(1D-myo-inositol) + CoA. The catalysed reaction is 1-octadecanoyl-sn-glycero-3-phospho-(1D-myo-inositol) + (5Z,8Z,11Z,14Z)-eicosatetraenoyl-CoA = 1-octadecanoyl-2-(5Z,8Z,11Z,14Z-eicosatetraenoyl)-sn-glycero-3-phospho-(1D-myo-inositol) + CoA. It functions in the pathway lipid metabolism; phospholipid metabolism. Acyltransferase which catalyzes the transfer of an acyl group from an acyl-CoA to a lysophosphatidylinositol (1-acylglycerophosphatidylinositol or LPI) leading to the production of a phosphatidylinositol (1,2-diacyl-sn-glycero-3-phosphoinositol or PI) and participates in the reacylation step of the phospholipid remodeling pathway also known as the Lands cycle. Prefers arachidonoyl-CoA as the acyl donor, thus contributing to the regulation of free levels arachidonic acid in cell. The polypeptide is Membrane-bound acylglycerophosphatidylinositol O-acyltransferase mboat7 (mboat7) (Danio rerio (Zebrafish)).